The primary structure comprises 423 residues: Sorting nexin-4 (423 aa).

Positions 1–21 (MTDKGKNDLTSKAKDKARGNP) are enriched in basic and acidic residues. Residues 1-25 (MTDKGKNDLTSKAKDKARGNPEKPP) are disordered. In terms of domain architecture, PX spans 29 to 157 (EIIVSDPQKR…TFLVSKDWES (129 aa)). A 1,2-diacyl-sn-glycero-3-phospho-(1D-myo-inositol-3-phosphate)-binding residues include arginine 78, serine 80, lysine 104, and arginine 123. 2 coiled-coil regions span residues 217 to 252 (KKND…AKLK) and 346 to 381 (SRRE…ECLK).

Belongs to the sorting nexin family. As to quaternary structure, forms a complex with ATG20 and ATG17. Binds also to SNC1 and SNX41.

It is found in the cytoplasm. Its subcellular location is the cytosol. The protein localises to the preautophagosomal structure membrane. It localises to the endosome membrane. Functionally, sorting nexin, involved in the separation or division of vacuoles throughout the entire life cycle of the cells. Involved in retrieval of late-Golgi SNAREs from post-Golgi endosomes to the trans-Golgi network, for cytoplasm to vacuole transport (Cvt), and autophagy of large cargos including mitophagy, pexophagy and glycophagy. Involved in proper sorting of the v-SNARE protein SNC1. The polypeptide is Sorting nexin-4 (Saccharomyces cerevisiae (strain ATCC 204508 / S288c) (Baker's yeast)).